The sequence spans 466 residues: SVGFKAGVKDYKLTYYTPEYETKDTDILAAFRVTPQPGVPPEEAGAAVAAESSTGTWTTVWTDGLTSLDRYKGRCYNIEPVAGEENQYIAYVAYPLDLFEEGSVTNMFTSIVGNVFGFKALRALRLEDLRIPKSYIKTFEGPPHGIQVERDKLNKYGRPLLGCTIKPKLGLSAKNYGRAVYECLRGGLDFTKDDENVNSQPFMRWRDRFLFCAEALFKAQAETGEIKGHYLNATAGTCEEMIKRAVCARELGAPIVMHDYLTGGFTANTSLAHYCRDNGLLLHIHRAMHAVIDRQKNHGMHFRVLAKALRLSGGDHIHAGTVVGKLEGEREITLGFVDLLRDDFVEKDRSRGIYFTQDWVSLPGVIPVASGGIHVWHMPALTEIFGDDSVLQFGGGTLGHPWGNAPGAVANRVALEACVQARNEGRDLAREGNTIIREASKWSPELAAACEVWKEIKFEFPAMDTL.

Position 5 is an N6,N6,N6-trimethyllysine (K5). Residues N114 and T164 each contribute to the substrate site. K166 acts as the Proton acceptor in catalysis. K168 is a binding site for substrate. The Mg(2+) site is built by K192, D194, and E195. Position 192 is an N6-carboxylysine (K192). H285 serves as the catalytic Proton acceptor. Positions 286, 318, and 370 each coordinate substrate.

The protein belongs to the RuBisCO large chain family. Type I subfamily. As to quaternary structure, heterohexadecamer of 8 large chains and 8 small chains; disulfide-linked. The disulfide link is formed within the large subunit homodimers. The cofactor is Mg(2+). The disulfide bond which can form in the large chain dimeric partners within the hexadecamer appears to be associated with oxidative stress and protein turnover.

Its subcellular location is the plastid. It is found in the chloroplast. It catalyses the reaction 2 (2R)-3-phosphoglycerate + 2 H(+) = D-ribulose 1,5-bisphosphate + CO2 + H2O. It carries out the reaction D-ribulose 1,5-bisphosphate + O2 = 2-phosphoglycolate + (2R)-3-phosphoglycerate + 2 H(+). In terms of biological role, ruBisCO catalyzes two reactions: the carboxylation of D-ribulose 1,5-bisphosphate, the primary event in carbon dioxide fixation, as well as the oxidative fragmentation of the pentose substrate in the photorespiration process. Both reactions occur simultaneously and in competition at the same active site. This is Ribulose bisphosphate carboxylase large chain from Gonopterodendron arboreum (Maracaibo lignum-vitae).